We begin with the raw amino-acid sequence, 449 residues long: Transcription factor AP-2 gamma (449 aa).

A Glycyl lysine isopeptide (Lys-Gly) (interchain with G-Cter in SUMO) cross-link involves residue lysine 10. The segment at 13–58 (EDCEDRHDSSSNGNPRIPHLSSPGQHLYSPAPPLSHTGVAEYQPPP) is disordered. Positions 59–64 (YFPPPY) match the PPxY motif motif. The tract at residues 94 to 130 (AATGSQQQAWPGRQSQEGSSLASHHSRSASLIPHISG) is disordered. Positions 95–111 (ATGSQQQAWPGRQSQEG) are enriched in polar residues. Positions 112–124 (SSLASHHSRSASL) are enriched in low complexity. Position 251 is a phosphoserine; by PKA (serine 251). The H-S-H (helix-span-helix), dimerization stretch occupies residues 292–423 (RRKAAHVTLL…YIKEALIAID (132 aa)). The tract at residues 426–449 (YMNPGDQSPADSSKTMEKMEKHRK) is disordered. The residue at position 433 (serine 433) is a Phosphoserine. Positions 439 to 449 (KTMEKMEKHRK) are enriched in basic and acidic residues.

Belongs to the AP-2 family. In terms of assembly, binds DNA as a dimer. Can form homodimers or heterodimers with other AP-2 family members. Interacts with WWOX. Interacts with UBE2I. Interacts with KCTD1; this interaction represses transcription activation. Interacts with CITED2 (via C-terminus); the interaction stimulates TFAP2B-transcriptional activity. Interacts with CITED4. Interacts with MTA1. Post-translationally, sumoylated on Lys-10; which inhibits transcriptional activity. As to expression, expressed in lung, ovary and testis. Expressed in most squamous epithelia. Also, detected in several exocrine glands including the prostate, the preputial and salivary glands, serous glands of the tongue and ocular harderian glands.

The protein localises to the nucleus. In terms of biological role, sequence-specific DNA-binding transcription factor that interacts with cellular enhancer elements to regulate transcription of selected genes, and which plays a key role in early embryonic development. AP-2 factors bind to the consensus sequence 5'-GCCNNNGGC-3' and activate genes involved in a large spectrum of important biological functions. TFAP2C plays a key role in early embryonic development by regulating both inner cell mass (ICM) and trophectoderm differentiation. At the 8-cell stage, during morula development, controls expression of cell-polarity genes. Upon trophoblast commitment, binds to late trophectoderm genes in blastocysts together with CDX2, and later to extra-embryonic ectoderm genes together with SOX2. Binds to both closed and open chromatin with other transcription factors. The chain is Transcription factor AP-2 gamma from Mus musculus (Mouse).